The following is an 877-amino-acid chain: Polycomb protein Scm (877 aa).

The tract at residues 1-57 (MSGGRDSSTSSGSNSAAPGASTNATSSASASASSTSTSASPGSTTSPASTQRQRGRP) is disordered. Low complexity predominate over residues 7 to 50 (SSTSSGSNSAAPGASTNATSSASASASSTSTSASPGSTTSPAST). The FCS-type zinc-finger motif lies at 54–93 (RGRPAKRATCTWCGEGKLPLQYVLPTQTGKKEFCSETCIA). The Zn(2+) site is built by cysteine 63, cysteine 66, cysteine 87, and cysteine 91. 2 MBT repeats span residues 175–273 (FDWD…LQPP) and 281–382 (SSWP…MQPP). Disordered regions lie at residues 535 to 621 (NSRK…SNKV), 652 to 692 (TNTN…GGSA), and 713 to 735 (ANVK…ASLP). Residue threonine 546 is modified to Phosphothreonine. Phosphoserine is present on residues serine 549 and serine 550. Positions 560–569 (QSNSATTSPS) are enriched in polar residues. Phosphoserine is present on serine 585. Residues 598–620 (ASQQNSNHSLNNNNNSASKSSNK) show a composition bias toward low complexity. Residues 724–735 (SPTTLSSSASLP) are compositionally biased toward low complexity. Residues 806-876 (WTIEEVIQYI…KVNGRRNNLA (71 aa)) form the SAM domain.

Belongs to the SCM family. As to quaternary structure, scm associates with the PRC1 core complex containing PSC, PC, PH and Sce/RING1. Forms homotypic and heterotypic interactions. Interacts with the SAM domain of ph-p via its SAM domain in vitro. Interacts with corto in vitro.

It is found in the nucleus. In terms of biological role, polycomb group (PcG) protein. PcG proteins act by forming multiprotein complexes, which are required to maintain the transcriptionally repressive state of homeotic genes throughout development. PcG proteins are not required to initiate repression, but to maintain it during later stages of development. They probably act via the methylation of histones, rendering chromatin heritably changed in its expressibility. This is Polycomb protein Scm from Drosophila melanogaster (Fruit fly).